Reading from the N-terminus, the 441-residue chain is tRNA-2-methylthio-N(6)-dimethylallyladenosine synthase (441 aa).

The 117-residue stretch at K5–E121 folds into the MTTase N-terminal domain. Residues C14, C50, C84, C159, C163, and C166 each contribute to the [4Fe-4S] cluster site. Residues A145–A375 form the Radical SAM core domain. The 63-residue stretch at R378 to H440 folds into the TRAM domain.

The protein belongs to the methylthiotransferase family. MiaB subfamily. As to quaternary structure, monomer. Requires [4Fe-4S] cluster as cofactor.

The protein localises to the cytoplasm. The catalysed reaction is N(6)-dimethylallyladenosine(37) in tRNA + (sulfur carrier)-SH + AH2 + 2 S-adenosyl-L-methionine = 2-methylsulfanyl-N(6)-dimethylallyladenosine(37) in tRNA + (sulfur carrier)-H + 5'-deoxyadenosine + L-methionine + A + S-adenosyl-L-homocysteine + 2 H(+). Catalyzes the methylthiolation of N6-(dimethylallyl)adenosine (i(6)A), leading to the formation of 2-methylthio-N6-(dimethylallyl)adenosine (ms(2)i(6)A) at position 37 in tRNAs that read codons beginning with uridine. This chain is tRNA-2-methylthio-N(6)-dimethylallyladenosine synthase, found in Citrifermentans bemidjiense (strain ATCC BAA-1014 / DSM 16622 / JCM 12645 / Bem) (Geobacter bemidjiensis).